A 148-amino-acid polypeptide reads, in one-letter code: FAD synthase (148 aa).

Residues 14 to 15 (VF), 19 to 22 (HVGH), and D100 contribute to the ATP site.

It belongs to the archaeal FAD synthase family. Homodimer. It depends on a divalent metal cation as a cofactor.

The catalysed reaction is FMN + ATP + H(+) = FAD + diphosphate. The protein operates within cofactor biosynthesis; FAD biosynthesis; FAD from FMN: step 1/1. Its function is as follows. Catalyzes the transfer of the AMP portion of ATP to flavin mononucleotide (FMN) to produce flavin adenine dinucleotide (FAD) coenzyme. The sequence is that of FAD synthase from Pyrococcus abyssi (strain GE5 / Orsay).